The following is a 534-amino-acid chain: Multicopper oxidase LPR1 homolog 3 (534 aa).

H84 and H86 together coordinate Cu cation. N109 is a glycosylation site (N-linked (GlcNAc...) asparagine). 2 residues coordinate Cu cation: H133 and H135. The 73-residue stretch at 219–291 (PFQAVQRRRY…VDFSLVVNPN (73 aa)) folds into the Plastocyanin-like domain. Residues N234, N291, N312, N323, N341, and N372 are each glycosylated (N-linked (GlcNAc...) asparagine). Positions 419, 422, and 424 each coordinate Cu cation. Residue N450 is glycosylated (N-linked (GlcNAc...) asparagine). Cu cation is bound by residues H515, C516, H517, H521, and M526.

This sequence belongs to the multicopper oxidase family. Requires Cu cation as cofactor. As to expression, expressed in roots and basal stems.

The protein resides in the endoplasmic reticulum membrane. Its function is as follows. Multicopper oxidase that may play a role in the maintenance of inorganic phosphate homeostasis. The polypeptide is Multicopper oxidase LPR1 homolog 3 (Oryza sativa subsp. japonica (Rice)).